The primary structure comprises 283 residues: ATP synthase gamma chain (283 aa).

This sequence belongs to the ATPase gamma chain family. F-type ATPases have 2 components, CF(1) - the catalytic core - and CF(0) - the membrane proton channel. CF(1) has five subunits: alpha(3), beta(3), gamma(1), delta(1), epsilon(1). CF(0) has three main subunits: a, b and c.

It localises to the cell inner membrane. Functionally, produces ATP from ADP in the presence of a proton gradient across the membrane. The gamma chain is believed to be important in regulating ATPase activity and the flow of protons through the CF(0) complex. This Ehrlichia ruminantium (strain Gardel) protein is ATP synthase gamma chain.